Here is a 212-residue protein sequence, read N- to C-terminus: MERSDQPPDVVIRRLPLYARSLRYLLEEGIHSVSSQELGERINVTAAQIRKDLSYFGEFGKQGIGYDVEKLLHHIERILGLNQHWPVVLVGIGLLGQAIARYEGFRSEGIEIVALFDSDPAKIGQRVGDLVIQDFANVRRVVAEKQVKLAIIAVPALQAQRVADVLIEAGVRAILSYAPMILQVPEDVWVRYIDPVAVLQSMTYYLAREQQH.

Positions leucine 17–phenylalanine 56 form a DNA-binding region, H-T-H motif. Glycine 91 to glycine 96 is a binding site for NAD(+).

Belongs to the transcriptional regulatory Rex family. As to quaternary structure, homodimer.

It localises to the cytoplasm. Modulates transcription in response to changes in cellular NADH/NAD(+) redox state. This Chloroflexus aggregans (strain MD-66 / DSM 9485) protein is Redox-sensing transcriptional repressor Rex.